The sequence spans 474 residues: Iroquois-class homeodomain protein IRX-2 (474 aa).

The segment at residues 115–177 (DPAYRKNATR…NARRRLKKEN (63 aa)) is a DNA-binding region (homeobox; TALE-type). Disordered stretches follow at residues 177–220 (NKMT…EDEG), 262–373 (EDLE…PGGS), and 420–461 (PGET…DTSE). The residue at position 187 (S187) is a Phosphoserine. A compositionally biased stretch (basic and acidic residues) spans 196–210 (DASRSKEESSDKAQD). The segment covering 262–275 (EDLEDEEDEEDECE) has biased composition (acidic residues). 2 stretches are compositionally biased toward low complexity: residues 293–305 (EAPL…EAAP) and 358–373 (PAAA…PGGS).

This sequence belongs to the TALE/IRO homeobox family. Expressed in specific and overlapping patterns with Irx1 and Irx3 in the developing and adult metanephric kidney. In the adult metanephros, renal expression is found in the loop of Henle in the S3 proximal tubule segment and in the thick ascending limb (TAL) of the distal tubule.

It localises to the nucleus. This Mus musculus (Mouse) protein is Iroquois-class homeodomain protein IRX-2 (Irx2).